The primary structure comprises 604 residues: MKLALLILLLLNPHLSSSKNTPASGQPQEDLVEQKCLLKNYTHHSCDKVFCQPWQKCIEGTCACKLPYQCPKAGTPVCATNGRGYPTYCHLKSFECLHPEIKFSNNGTCTAEEKFNVSLIYGSTDTEGIVQVKLVDQDEKMFICKNSWSTVEANVACFDLGFPLGVRDIQGRFNIPVNHKINSTECLHVRCQGVETSLAECTFTKKSSKAPHGLAGVVCYTQDADFPTSQSFQCVNGKRIPQEKACDGVNDCGDQSDELCCKGCRGQAFLCKSGVCIPNQRKCNGEVDCITGEDESGCEEDKKNKIHKGLARSDQGGETEIETEETEMLTPDMDTERKRIKSLLPKLSCGVKRNTHIRRKRVVGGKPAEMGDYPWQVAIKDGDRITCGGIYIGGCWILTAAHCVRPSRYRNYQVWTSLLDWLKPNSQLAVQGVSRVVVHEKYNGATYQNDIALVEMKKHPGKKECELINSVPACVPWSPYLFQPNDRCIISGWGREKDNQKVYSLRWGEVDLIGNCSRFYPGRYYEKEMQCAGTSDGSIDACKGDSGGPLVCKDVNNVTYVWGIVSWGENCGKPEFPGVYTRVASYFDWISYYVGRPLVSQYNV.

An N-terminal signal peptide occupies residues 1–18; that stretch reads MKLALLILLLLNPHLSSS. Cystine bridges form between C36–C260, C46–C57, C51–C62, C64–C96, C70–C89, C78–C109, C144–C186, C157–C219, C191–C201, C234–C252, C246–C261, C264–C276, C271–C289, C283–C298, C349–C474, C387–C403, C395–C465, C488–C552, C516–C531, and C542–C571. N-linked (GlcNAc...) asparagine glycosylation is present at N40. The 54-residue stretch at 58 to 111 folds into the Kazal-like domain; the sequence is IEGTCACKLPYQCPKAGTPVCATNGRGYPTYCHLKSFECLHPEIKFSNNGTCTA. Residues N106, N116, and N182 are each glycosylated (N-linked (GlcNAc...) asparagine). The SRCR domain maps to 117–217; it reads VSLIYGSTDT…SKAPHGLAGV (101 aa). 2 LDL-receptor class A domains span residues 218-262 and 263-299; these read VCYT…LCCK and GCRGQAFLCKSGVCIPNQRKCNGEVDCITGEDESGCE. Residues K244, D247, V249, D251, D257, and E258 each contribute to the Ca(2+) site. 5 residues coordinate Ca(2+): N284, E286, D288, D294, and E295. Positions 362-595 constitute a Peptidase S1 domain; the sequence is VVGGKPAEMG…YFDWISYYVG (234 aa). Residues H402 and D450 each act as charge relay system in the active site. An N-linked (GlcNAc...) asparagine glycan is attached at N515. The active-site Charge relay system is S546. A glycan (N-linked (GlcNAc...) asparagine) is linked at N557.

This sequence belongs to the peptidase S1 family. Heterodimer of a light and heavy chains; disulfide-linked. The fully processed and mature protein circulates as a zymogen, and is allosterically activated by substrate-induced remodeling of the active site. Interacts with C3b. Interacts with complement factor H. As to expression, expressed in the liver by hepatocytes. Also present in other cells such as monocytes, fibroblasts or keratinocytes.

It localises to the secreted. The protein resides in the extracellular space. It catalyses the reaction Inactivates complement subcomponents C3b, iC3b and C4b by proteolytic cleavage.. In terms of biological role, trypsin-like serine protease that plays an essential role in regulating the immune response by controlling all complement pathways. Inhibits these pathways by cleaving three peptide bonds in the alpha-chain of C3b and two bonds in the alpha-chain of C4b thereby inactivating these proteins. Essential cofactors for these reactions include factor H and C4BP in the fluid phase and membrane cofactor protein/CD46 and CR1 on cell surfaces. The presence of these cofactors on healthy cells allows degradation of deposited C3b by CFI in order to prevent undesired complement activation, while in apoptotic cells or microbes, the absence of such cofactors leads to C3b-mediated complement activation and subsequent opsonization. This chain is Complement factor I (Cfi), found in Rattus norvegicus (Rat).